Here is a 258-residue protein sequence, read N- to C-terminus: DNA-directed RNA polymerase subunit Rpo3 (258 aa).

It belongs to the archaeal Rpo3/eukaryotic RPB3 RNA polymerase subunit family. As to quaternary structure, part of the RNA polymerase complex.

Its subcellular location is the cytoplasm. It catalyses the reaction RNA(n) + a ribonucleoside 5'-triphosphate = RNA(n+1) + diphosphate. Functionally, DNA-dependent RNA polymerase (RNAP) catalyzes the transcription of DNA into RNA using the four ribonucleoside triphosphates as substrates. In Pyrobaculum calidifontis (strain DSM 21063 / JCM 11548 / VA1), this protein is DNA-directed RNA polymerase subunit Rpo3.